The primary structure comprises 245 residues: Biosynthetic peptidoglycan transglycosylase (245 aa).

A helical transmembrane segment spans residues 13 to 35; that stretch reads VGLARWIVYAGSVFAGAWLATQL.

Belongs to the glycosyltransferase 51 family.

It localises to the cell inner membrane. The catalysed reaction is [GlcNAc-(1-&gt;4)-Mur2Ac(oyl-L-Ala-gamma-D-Glu-L-Lys-D-Ala-D-Ala)](n)-di-trans,octa-cis-undecaprenyl diphosphate + beta-D-GlcNAc-(1-&gt;4)-Mur2Ac(oyl-L-Ala-gamma-D-Glu-L-Lys-D-Ala-D-Ala)-di-trans,octa-cis-undecaprenyl diphosphate = [GlcNAc-(1-&gt;4)-Mur2Ac(oyl-L-Ala-gamma-D-Glu-L-Lys-D-Ala-D-Ala)](n+1)-di-trans,octa-cis-undecaprenyl diphosphate + di-trans,octa-cis-undecaprenyl diphosphate + H(+). It functions in the pathway cell wall biogenesis; peptidoglycan biosynthesis. Peptidoglycan polymerase that catalyzes glycan chain elongation from lipid-linked precursors. The protein is Biosynthetic peptidoglycan transglycosylase of Burkholderia vietnamiensis (strain G4 / LMG 22486) (Burkholderia cepacia (strain R1808)).